The chain runs to 283 residues: Shikimate kinase (283 aa).

86 to 96 contacts ATP; that stretch reads PLKSGLSSSSA.

It belongs to the GHMP kinase family. Archaeal shikimate kinase subfamily.

The protein resides in the cytoplasm. It carries out the reaction shikimate + ATP = 3-phosphoshikimate + ADP + H(+). It participates in metabolic intermediate biosynthesis; chorismate biosynthesis; chorismate from D-erythrose 4-phosphate and phosphoenolpyruvate: step 5/7. The protein is Shikimate kinase of Methanococcus vannielii (strain ATCC 35089 / DSM 1224 / JCM 13029 / OCM 148 / SB).